Consider the following 255-residue polypeptide: Aliphatic sulfonates import ATP-binding protein SsuB (255 aa).

The ABC transporter domain maps to 12-233 (LLLNAVSKHY…RLGSVRLAEL (222 aa)). ATP is bound at residue 44–51 (GRSGGGKS).

This sequence belongs to the ABC transporter superfamily. Aliphatic sulfonates importer (TC 3.A.1.17.2) family. The complex is composed of two ATP-binding proteins (SsuB), two transmembrane proteins (SsuC) and a solute-binding protein (SsuA).

The protein localises to the cell inner membrane. It carries out the reaction ATP + H2O + aliphatic sulfonate-[sulfonate-binding protein]Side 1 = ADP + phosphate + aliphatic sulfonateSide 2 + [sulfonate-binding protein]Side 1.. Part of the ABC transporter complex SsuABC involved in aliphatic sulfonates import. Responsible for energy coupling to the transport system. In Escherichia coli O6:H1 (strain CFT073 / ATCC 700928 / UPEC), this protein is Aliphatic sulfonates import ATP-binding protein SsuB.